Here is a 988-residue protein sequence, read N- to C-terminus: Isoleucine--tRNA ligase (988 aa).

The 'HIGH' region motif lies at 60 to 70; the sequence is PYANGALHMGH. Glutamate 570 contacts L-isoleucyl-5'-AMP. Residues 611 to 615 carry the 'KMSKS' region motif; sequence KMSKS. Residue lysine 614 participates in ATP binding. Zn(2+) contacts are provided by cysteine 957, cysteine 960, cysteine 977, and cysteine 980.

The protein belongs to the class-I aminoacyl-tRNA synthetase family. IleS type 1 subfamily. As to quaternary structure, monomer. Requires Zn(2+) as cofactor.

Its subcellular location is the cytoplasm. It carries out the reaction tRNA(Ile) + L-isoleucine + ATP = L-isoleucyl-tRNA(Ile) + AMP + diphosphate. Its function is as follows. Catalyzes the attachment of isoleucine to tRNA(Ile). As IleRS can inadvertently accommodate and process structurally similar amino acids such as valine, to avoid such errors it has two additional distinct tRNA(Ile)-dependent editing activities. One activity is designated as 'pretransfer' editing and involves the hydrolysis of activated Val-AMP. The other activity is designated 'posttransfer' editing and involves deacylation of mischarged Val-tRNA(Ile). The protein is Isoleucine--tRNA ligase of Synechocystis sp. (strain ATCC 27184 / PCC 6803 / Kazusa).